Consider the following 102-residue polypeptide: Small ribosomal subunit protein uS10 (102 aa).

Belongs to the universal ribosomal protein uS10 family. In terms of assembly, part of the 30S ribosomal subunit.

In terms of biological role, involved in the binding of tRNA to the ribosomes. The polypeptide is Small ribosomal subunit protein uS10 (Streptococcus equi subsp. zooepidemicus (strain MGCS10565)).